A 95-amino-acid chain; its full sequence is Small ribosomal subunit protein bS6 (95 aa).

This sequence belongs to the bacterial ribosomal protein bS6 family.

Its function is as follows. Binds together with bS18 to 16S ribosomal RNA. This chain is Small ribosomal subunit protein bS6, found in Clostridium novyi (strain NT).